Consider the following 211-residue polypeptide: ATP-dependent Clp protease proteolytic subunit 1 (211 aa).

Residue Ser-107 is the Nucleophile of the active site. His-132 is an active-site residue.

The protein belongs to the peptidase S14 family. In terms of assembly, fourteen ClpP subunits assemble into 2 heptameric rings which stack back to back to give a disk-like structure with a central cavity, resembling the structure of eukaryotic proteasomes.

It localises to the cytoplasm. The enzyme catalyses Hydrolysis of proteins to small peptides in the presence of ATP and magnesium. alpha-casein is the usual test substrate. In the absence of ATP, only oligopeptides shorter than five residues are hydrolyzed (such as succinyl-Leu-Tyr-|-NHMec, and Leu-Tyr-Leu-|-Tyr-Trp, in which cleavage of the -Tyr-|-Leu- and -Tyr-|-Trp bonds also occurs).. In terms of biological role, cleaves peptides in various proteins in a process that requires ATP hydrolysis. Has a chymotrypsin-like activity. Plays a major role in the degradation of misfolded proteins. This is ATP-dependent Clp protease proteolytic subunit 1 from Mycolicibacterium paratuberculosis (strain ATCC BAA-968 / K-10) (Mycobacterium paratuberculosis).